The following is a 246-amino-acid chain: Triosephosphate isomerase (246 aa).

9-11 provides a ligand contact to substrate; the sequence is NWK. H95 serves as the catalytic Electrophile. E165 acts as the Proton acceptor in catalysis. Substrate-binding positions include G171, S210, and 231–232; that span reads GG.

The protein belongs to the triosephosphate isomerase family. In terms of assembly, homodimer.

It is found in the cytoplasm. The enzyme catalyses D-glyceraldehyde 3-phosphate = dihydroxyacetone phosphate. Its pathway is carbohydrate biosynthesis; gluconeogenesis. The protein operates within carbohydrate degradation; glycolysis; D-glyceraldehyde 3-phosphate from glycerone phosphate: step 1/1. Involved in the gluconeogenesis. Catalyzes stereospecifically the conversion of dihydroxyacetone phosphate (DHAP) to D-glyceraldehyde-3-phosphate (G3P). This chain is Triosephosphate isomerase, found in Thermodesulfovibrio yellowstonii (strain ATCC 51303 / DSM 11347 / YP87).